Reading from the N-terminus, the 107-residue chain is Putative antitoxin VapB5 (107 aa).

2 helical membrane-spanning segments follow: residues 3 to 23 (GPVIIPLISTLGLSFLAILLA) and 65 to 85 (LIILTPALTWSLTALSMAYLY).

It is found in the cell membrane. Its function is as follows. Possibly the antitoxin component of a type II toxin-antitoxin (TA) system. Its cognate toxin is VapC5 (Potential). This is Putative antitoxin VapB5 (vapB5) from Methanocaldococcus jannaschii (strain ATCC 43067 / DSM 2661 / JAL-1 / JCM 10045 / NBRC 100440) (Methanococcus jannaschii).